A 302-amino-acid chain; its full sequence is Heat stress transcription factor B-1 (302 aa).

Low complexity predominate over residues 1-15 (MAAAEAAAAVGKQQQ). Disordered regions lie at residues 1–33 (MAAA…PFLT) and 116–184 (GIRR…RKDN). The span at 16–28 (KGGGGRGGGGGGP) shows a compositional bias: gly residues. The span at 123 to 133 (TTPQSSKSCGS) shows a compositional bias: polar residues. Residues 139–150 (FPPPLPPLPPEP) are compositionally biased toward pro residues. Over residues 151 to 172 (SATTSSGNDRSSSSASSPPRAD) the composition is skewed to low complexity. Positions 170-202 (RADITSENEQLRKDNQTLTMELARARRHCEELL) form a coiled coil. The interval 180 to 209 (LRKDNQTLTMELARARRHCEELLGFLSRFL) is hydrophobic repeat HR-A/B. The Nuclear export signal motif lies at 211-218 (VRQLDLRL). The Nuclear localization signal signature appears at 263–267 (RKRAR).

Belongs to the HSF family. Class B subfamily. In terms of assembly, homotrimer. In terms of processing, exhibits temperature-dependent phosphorylation.

The protein resides in the cytoplasm. It localises to the nucleus. Functionally, transcriptional regulator that specifically binds DNA of heat shock promoter elements (HSE). The chain is Heat stress transcription factor B-1 (HSFB1) from Oryza sativa subsp. japonica (Rice).